Here is a 154-residue protein sequence, read N- to C-terminus: MIYTIEVQLDEGITADSELVERAAAAVLAAEQMPEGCEVGIRITTDDELHRLNRDFRGVDAPTDVLSFADDGHDSRFVVAPDQPRYLGDIAISYQRVLAQAAEYGHSPARELAYLTVHGVLHLLGYDHEQGPAEAARMRTREEEIMTILGLPRE.

Zn(2+) contacts are provided by His-118, His-122, and His-128.

It belongs to the endoribonuclease YbeY family. Zn(2+) is required as a cofactor.

The protein localises to the cytoplasm. Its function is as follows. Single strand-specific metallo-endoribonuclease involved in late-stage 70S ribosome quality control and in maturation of the 3' terminus of the 16S rRNA. This chain is Endoribonuclease YbeY, found in Chloroflexus aurantiacus (strain ATCC 29366 / DSM 635 / J-10-fl).